Here is a 405-residue protein sequence, read N- to C-terminus: Bifunctional enzyme IspD/IspF (405 aa).

The 2-C-methyl-D-erythritol 4-phosphate cytidylyltransferase stretch occupies residues 1–240 (MTLADKPVLS…KLLLDEPKYR (240 aa)). A 2-C-methyl-D-erythritol 2,4-cyclodiphosphate synthase region spans residues 240–405 (RVGTGYDIHR…LLYKIAPLHN (166 aa)). 2 residues coordinate a divalent metal cation: D246 and H248. Residues 246-248 (DIH) and 277-278 (HS) contribute to the 4-CDP-2-C-methyl-D-erythritol 2-phosphate site. A divalent metal cation is bound at residue H285. 4-CDP-2-C-methyl-D-erythritol 2-phosphate is bound by residues 299–301 (DIG), 375–378 (TTTE), and R385.

This sequence in the N-terminal section; belongs to the IspD/TarI cytidylyltransferase family. IspD subfamily. The protein in the C-terminal section; belongs to the IspF family. A divalent metal cation serves as cofactor.

The catalysed reaction is 2-C-methyl-D-erythritol 4-phosphate + CTP + H(+) = 4-CDP-2-C-methyl-D-erythritol + diphosphate. The enzyme catalyses 4-CDP-2-C-methyl-D-erythritol 2-phosphate = 2-C-methyl-D-erythritol 2,4-cyclic diphosphate + CMP. It participates in isoprenoid biosynthesis; isopentenyl diphosphate biosynthesis via DXP pathway; isopentenyl diphosphate from 1-deoxy-D-xylulose 5-phosphate: step 2/6. Its pathway is isoprenoid biosynthesis; isopentenyl diphosphate biosynthesis via DXP pathway; isopentenyl diphosphate from 1-deoxy-D-xylulose 5-phosphate: step 4/6. Its function is as follows. Bifunctional enzyme that catalyzes the formation of 4-diphosphocytidyl-2-C-methyl-D-erythritol from CTP and 2-C-methyl-D-erythritol 4-phosphate (MEP) (IspD), and catalyzes the conversion of 4-diphosphocytidyl-2-C-methyl-D-erythritol 2-phosphate (CDP-ME2P) to 2-C-methyl-D-erythritol 2,4-cyclodiphosphate (ME-CPP) with a corresponding release of cytidine 5-monophosphate (CMP) (IspF). This Wolbachia sp. subsp. Brugia malayi (strain TRS) protein is Bifunctional enzyme IspD/IspF.